The primary structure comprises 141 residues: Hemoglobin subunit alpha (141 aa).

Residues 1–141 (VLSPADKTNV…VSTVLTSKYR (141 aa)) enclose the Globin domain. At Ser3 the chain carries Phosphoserine. Lys7 bears the N6-succinyllysine mark. At Thr8 the chain carries Phosphothreonine. Position 11 is an N6-succinyllysine (Lys11). Lys16 bears the N6-acetyllysine; alternate mark. The residue at position 16 (Lys16) is an N6-succinyllysine; alternate. A Phosphotyrosine modification is found at Tyr24. Residue Ser35 is modified to Phosphoserine. Lys40 carries the N6-succinyllysine modification. Ser49 is subject to Phosphoserine. An O2-binding site is contributed by His58. Residue His87 coordinates heme b. A Phosphoserine modification is found at Ser102. Thr108 is subject to Phosphothreonine. 2 positions are modified to phosphoserine: Ser124 and Ser131. Phosphothreonine occurs at positions 134 and 137. Residue Ser138 is modified to Phosphoserine.

It belongs to the globin family. As to quaternary structure, heterotetramer of two alpha chains and two beta chains. As to expression, red blood cells.

Involved in oxygen transport from the lung to the various peripheral tissues. In terms of biological role, hemopressin acts as an antagonist peptide of the cannabinoid receptor CNR1. Hemopressin-binding efficiently blocks cannabinoid receptor CNR1 and subsequent signaling. The sequence is that of Hemoglobin subunit alpha (HBA) from Loris tardigradus (Slender loris).